The primary structure comprises 68 residues: Amphipathic peptide OcyC1 (68 aa).

The signal sequence occupies residues 1 to 23 (MKAQLCILLIALVLFQTFSQSDA). At Phe36 the chain carries Phenylalanine amide. A propeptide spanning residues 38 to 68 (RRGLNDLDDLDELFDGEISQADVDFLNELMR) is cleaved from the precursor.

It belongs to the non-disulfide-bridged peptide (NDBP) superfamily. Short antimicrobial peptide (group 4) family. As to expression, expressed by the venom gland.

The protein resides in the secreted. It localises to the target cell membrane. In terms of biological role, antimicrobial peptide. Inhibits the growth of Gram-positive and Gram-negative bacteria. Shows antifungal activity with MIC values ranging from 12.5 to 25 uM. Also shows an inhibitory activity on C.albicans biofilms at high concentrations. Shows low cytotoxic activity and has weak hemolytic activity. This chain is Amphipathic peptide OcyC1, found in Opisthacanthus cayaporum (South American scorpion).